Here is a 254-residue protein sequence, read N- to C-terminus: Ubiquinone biosynthesis O-methyltransferase (254 aa).

Positions 47, 76, 97, and 141 each coordinate S-adenosyl-L-methionine.

Belongs to the methyltransferase superfamily. UbiG/COQ3 family.

The catalysed reaction is a 3-demethylubiquinol + S-adenosyl-L-methionine = a ubiquinol + S-adenosyl-L-homocysteine + H(+). It catalyses the reaction a 3-(all-trans-polyprenyl)benzene-1,2-diol + S-adenosyl-L-methionine = a 2-methoxy-6-(all-trans-polyprenyl)phenol + S-adenosyl-L-homocysteine + H(+). The protein operates within cofactor biosynthesis; ubiquinone biosynthesis. Functionally, O-methyltransferase that catalyzes the 2 O-methylation steps in the ubiquinone biosynthetic pathway. This Maricaulis maris (strain MCS10) (Caulobacter maris) protein is Ubiquinone biosynthesis O-methyltransferase.